The sequence spans 1038 residues: Zinc finger protein 628 (1038 aa).

The interval 1–31 (MAGSHVDMAPASTTEGTGEKPGPTAPAPTPA) is disordered. Positions 13–22 (TTEGTGEKPG) are enriched in low complexity. C2H2-type zinc fingers lie at residues 34–56 (YECG…QRTH), 62–84 (YKCP…QRGH), 90–112 (YQCP…RSVH), 118–140 (FTCG…LRQH), 146–168 (YPCP…RHVH), and 174–196 (YTCG…QRVH). T197 is subject to Phosphothreonine. The C2H2-type 7 zinc finger occupies 202–224 (FRCPLCPKTFTHSSNLLLHHRTH). 2 disordered regions span residues 220–242 (HHRT…ETSR) and 254–273 (LQPR…PPVV). Composition is skewed to pro residues over residues 227-237 (APGPAPAPAPP) and 257-273 (RSPP…PPVV). 7 consecutive C2H2-type zinc fingers follow at residues 346 to 368 (FACL…QHSH), 376 to 398 (FRCG…QQCH), 446 to 468 (YKCA…LRDH), 474 to 496 (YQCG…QRVH), 502 to 524 (FTCG…LRLH), 530 to 552 (YACT…RHVH), and 558 to 580 (HSCS…QRVH). T581 bears the Phosphothreonine mark. 2 C2H2-type zinc fingers span residues 586–608 (FRCP…QRTH) and 614–636 (FACP…LRTH). Disordered stretches follow at residues 637–661 (TPAT…LAAA) and 717–763 (PSSV…AGQG). Positions 723–733 (PTPPPPPPPPK) are enriched in pro residues. Residues 734 to 756 (VILLPPASAGGPGSGAARPGPRS) show a composition bias toward low complexity. Repeat copies occupy residues 811–821 (VQLQPAQEVAT), 822–832 (VQLQPAQEVTT), 833–843 (VQLQPAQEVTT), and 844–854 (VQLQPLTGQVS). Residues 811–854 (VQLQPAQEVATVQLQPAQEVTTVQLQPAQEVTTVQLQPLTGQVS) form a 4 X 11 AA tandem repeats of VQLQP-[AL]-[QT]-[EG]-[VQ]-[ATV]-[ST] region. The interaction with TAF4B stretch occupies residues 922–1038 (DGEQTRLCVQ…LPAVQLVHTF (117 aa)).

In terms of assembly, interacts with TAF4B. Expressed widely in testis, in both germline and somatic cells. Seems to have particularly strong expression in meiotic spermatocytes, postmeiotic round spermatids and Sertoli cells. Not detected in elongating spermatids or mature sperm (at protein level). Expressed in testis, ovary, spleen, lung, brain, liver and kidney. Expressed in D3 embryonic stem cells and F9 embryonal carcinoma cells.

It is found in the nucleus. In terms of biological role, transcriptional activator. Binds DNA on GT-box consensus sequence 5'-TTGGTT-3'. Plays a role in spermiogenesis. In Mus musculus (Mouse), this protein is Zinc finger protein 628.